The following is a 750-amino-acid chain: Methylmalonyl-CoA mutase, mitochondrial (750 aa).

Residues 1–32 (MLRAKNQLFLLSPHYLRQVKESSGSRLIQQRL) constitute a mitochondrion transit peptide. Residue Q50 coordinates malonyl-CoA. K89 is modified (N6-acetyllysine). Malonyl-CoA is bound by residues 96-99 (YPTM) and 106-110 (TIRQY). K212 is subject to N6-acetyllysine. Malonyl-CoA contacts are provided by residues 216 to 218 (TIQ), R228, K255, H265, and 304 to 306 (RLS). K335 bears the N6-acetyllysine mark. Position 343 is an N6-succinyllysine (K343). S481 bears the Phosphoserine mark. An N6-succinyllysine modification is found at K595. At K602 the chain carries N6-acetyllysine. A B12-binding domain is found at 614 to 746 (RPRLLVAKMG…DDIEKCLEKK (133 aa)). An adenosylcob(III)alamin-binding site is contributed by H627.

Belongs to the methylmalonyl-CoA mutase family. In terms of assembly, homodimer. Interacts (the apoenzyme form) with MMAA; the interaction is GTP dependent. Adenosylcob(III)alamin serves as cofactor.

It is found in the mitochondrion matrix. The protein resides in the mitochondrion. The protein localises to the cytoplasm. It carries out the reaction (R)-methylmalonyl-CoA = succinyl-CoA. During catalysis, accumulation of oxidized inactive cofactor hydroxocobalamin (OH2Cbl) leads to loss of MMUT activity. Interaction with MMAA decreases the rate of OH2Cbl formation and promotes the replacement of OH2Cbl by the active cofactor adenosylcobalamin (AdoCbl), thereby restoring MMUT activity. Inhibited by itaconyl-CoA, a metabolite that inactivates the coenzyme B12 cofactor. Inhibited at high concentration of substrate. In terms of biological role, catalyzes the reversible isomerization of methylmalonyl-CoA (MMCoA) (generated from branched-chain amino acid metabolism and degradation of dietary odd chain fatty acids and cholesterol) to succinyl-CoA (3-carboxypropionyl-CoA), a key intermediate of the tricarboxylic acid cycle. This is Methylmalonyl-CoA mutase, mitochondrial from Homo sapiens (Human).